Consider the following 70-residue polypeptide: U-actitoxin-Avd11a (70 aa).

Residues 36–70 (CNDYKSSSYCRSVGSRNECGIHKYRMYCRKTCGSC) form the ShKT domain. 3 cysteine pairs are disulfide-bonded: C36-C70, C45-C63, and C54-C67. A crucial for binding to potassium channels region spans residues 58-59 (KY).

The protein belongs to the sea anemone type 1 potassium channel toxin family. Type 1b subfamily.

Its subcellular location is the secreted. The protein resides in the nematocyst. Inhibits voltage-gated potassium channels (Kv1/KCNA). This Anemonia viridis (Snakelocks anemone) protein is U-actitoxin-Avd11a.